The following is a 149-amino-acid chain: 2S seed storage albumin protein (149 aa).

The N-terminal stretch at 1–22 (MKLFIILATATLLIAATQAKYL) is a signal peptide. 4 disulfides stabilise this stretch: Cys-38-Cys-98, Cys-52-Cys-87, Cys-88-Cys-133, and Cys-100-Cys-140. 4 no IgE-binding regions span residues 41-53 (QVKMMEPELVKCN), 68-81 (ALSRIQGEGCESEE), 84-95 (LRGCCVAMKEME), and 97-105 (ECVCEWMKM). The igE-binding stretch occupies residues 108-117 (ENQKGRIGET). The segment at 121-131 (KGIRDLKELPN) is no IgE-binding. An igE-binding region spans residues 132–141 (KCGISEMECH).

It belongs to the 2S seed storage albumins family. In terms of tissue distribution, expressed in seeds (at protein level). Expressed in seeds.

In terms of biological role, seed storage protein. The chain is 2S seed storage albumin protein from Fagopyrum tataricum (Tartarian buckwheat).